We begin with the raw amino-acid sequence, 844 residues long: Meiosis-specific protein PAIR3 (844 aa).

Disordered regions lie at residues 41–389 (TSSV…RERR), 418–506 (KLSS…RFSD), 532–604 (DDLF…QISI), and 616–669 (WLSD…EPEK). Residues 106–120 (QPDDNAIEQTGTFSF) are compositionally biased toward polar residues. Composition is skewed to basic and acidic residues over residues 122-134 (TRRE…DQLD) and 145-164 (RQVE…RMKL). Polar residues-rich tracts occupy residues 191-208 (QPKS…QKVF) and 218-229 (TPAQFNSQTANK). 2 stretches are compositionally biased toward basic and acidic residues: residues 256 to 270 (RKKE…DKSG) and 324 to 363 (AKVE…KGEK). Polar residues-rich tracts occupy residues 364–382 (TNSF…SCSR) and 420–440 (SSPQ…SPQQ). A compositionally biased stretch (basic and acidic residues) spans 441–456 (KENDNTHIPEASDRTA). Residues 459 to 473 (NSFNSTPSPAANPSP) are compositionally biased toward low complexity. The segment covering 545 to 554 (RSRSTSFTSD) has biased composition (polar residues). Residues 616 to 640 (WLSDVDSPDKSSIEHLGRKSHLKEG) are compositionally biased toward basic and acidic residues. Polar residues predominate over residues 646–661 (QLTSPTHFATSGTQET). The stretch at 731–765 (VNAGKSKRKRLESTFEEQQEKLRILHEKFKEEVNQ) forms a coiled coil.

Expressed in pollen mother cells and the ovule tissues during meiosis.

The protein localises to the chromosome. Its subcellular location is the nucleus. Plays a crucial role in homologous chromosome pairing and synapsis in meiosis. Does not seem required for cytokinesis. Is essential for meiotic bouquet formation, homologous chromosome pairing and normal recombination, and synaptonemal complex (SC) assembly. Required for the proper association of PAIR2 with chromosomes. This is Meiosis-specific protein PAIR3 from Oryza sativa subsp. japonica (Rice).